Here is a 284-residue protein sequence, read N- to C-terminus: Probable endonuclease 4 (284 aa).

The Zn(2+) site is built by His69, His109, Glu145, Asp179, His182, His216, Asp229, His231, and Glu261.

This sequence belongs to the AP endonuclease 2 family. Zn(2+) serves as cofactor.

It carries out the reaction Endonucleolytic cleavage to 5'-phosphooligonucleotide end-products.. Its function is as follows. Endonuclease IV plays a role in DNA repair. It cleaves phosphodiester bonds at apurinic or apyrimidinic (AP) sites, generating a 3'-hydroxyl group and a 5'-terminal sugar phosphate. This chain is Probable endonuclease 4, found in Chlorobium phaeobacteroides (strain BS1).